The sequence spans 517 residues: Benzoate 4-monooxygenase bphA (517 aa).

A helical membrane pass occupies residues 4–24 (LLLSPYGAYLGLALLVLYYLL). N-linked (GlcNAc...) asparagine glycans are attached at residues N282 and N325. C461 is a binding site for heme.

It belongs to the cytochrome P450 family. It depends on heme as a cofactor.

It is found in the membrane. The catalysed reaction is benzoate + reduced [NADPH--hemoprotein reductase] + O2 = 4-hydroxybenzoate + oxidized [NADPH--hemoprotein reductase] + H2O + H(+). In terms of biological role, cytochrome P450 monooxygenase; part of the benzoic acid degradation pathway also known as the protocatechuic acid pathway. Benzoic acid debradation begins with the conversion of benzoic acid into 4-hydroxybenzoic acid through hydroxylation by the benzoate-4-monooxygenase bphA, and its partner NADPH-cytochrome P450 reductase cprA which act as a mediator in electron donation from NADPH. 4-Hydroxybenzoic acid is then converted into 3,4-dihydroxybenzoic acid (also called protocatechuic acid) by the p-hydroxybenzoate-m-hydroxylase phhA. Protocatechuic acid is converted into 3-carboxy-cis,cis-muconic acid by the intradiol ring-cleavage dioxygenase prcA, which is further metabolized through the 3-oxoadipate pathway to finally enter the tricarboxylic acid cycle (TCA). Its function is as follows. Responsible for cytochrome P450 dependent benzoate hydroxylation in microsomes; requires cprA as the mediator in electron donation from NADPH. This is Benzoate 4-monooxygenase bphA from Aspergillus niger.